We begin with the raw amino-acid sequence, 264 residues long: Heavy metal-associated isoprenylated plant protein 17 (264 aa).

HMA domains lie at 32-95 and 133-204; these read VTDA…KKIE and IMEV…KERQ. Positions 185 to 218 form a coiled coil; sequence SRKLNKKMHQKIKKAEKERQEWESEMMLREAEEE. Cysteine 261 is modified (cysteine methyl ester). Cysteine 261 is lipidated: S-farnesyl cysteine. A propeptide spans 262–264 (removed in mature form); it reads SIS.

It belongs to the HIPP family.

Its function is as follows. Probable heavy-metal-binding protein. This is Heavy metal-associated isoprenylated plant protein 17 from Arabidopsis thaliana (Mouse-ear cress).